Here is a 129-residue protein sequence, read N- to C-terminus: Small ribosomal subunit protein uS11 (129 aa).

It belongs to the universal ribosomal protein uS11 family. In terms of assembly, part of the 30S ribosomal subunit. Interacts with proteins S7 and S18. Binds to IF-3.

Its function is as follows. Located on the platform of the 30S subunit, it bridges several disparate RNA helices of the 16S rRNA. Forms part of the Shine-Dalgarno cleft in the 70S ribosome. The chain is Small ribosomal subunit protein uS11 from Lawsonia intracellularis (strain PHE/MN1-00).